Reading from the N-terminus, the 297-residue chain is Heterogeneous nuclear ribonucleoprotein D-like (297 aa).

The tract at residues 1 to 21 is disordered; the sequence is MTGFGATPDFNEGSKINASKN. 2 RRM domains span residues 26–108 and 111–190; these read GKMF…KGKE and KKVF…QPKE. The interval 192 to 224 is disordered; sequence YRQQQQKQQKGGRGAATGRGGARGRGRGQGWNQ. Positions 202-222 are enriched in gly residues; the sequence is GGRGAATGRGGARGRGRGQGW.

Its subcellular location is the nucleus. It is found in the cytoplasm. Its function is as follows. Acts as a transcriptional regulator. Binds DNA and RNA. The protein is Heterogeneous nuclear ribonucleoprotein D-like (hnrnpdl) of Xenopus tropicalis (Western clawed frog).